Reading from the N-terminus, the 458-residue chain is Transcription factor bHLH10 (458 aa).

The interval 1–49 (MEEERESLYEEMGCFDPNTPAEVTVESSFSQAEPPPPPPQVLVAGSTSN) is disordered. Positions 243–292 (SRKSRTSPTERERRVHFNDRFFDLKNLIPNPTKIDRASIVGEAIDYIKEL) constitute a bHLH domain. A disordered region spans residues 315 to 338 (KRARVGEGGGGEDQEEEEDTVNYK). Residues 324–334 (GGEDQEEEEDT) show a composition bias toward acidic residues.

Homodimer.

The protein resides in the nucleus. The sequence is that of Transcription factor bHLH10 (BHLH10) from Arabidopsis thaliana (Mouse-ear cress).